The sequence spans 117 residues: UPF0342 protein lmo2223 (117 aa).

The protein belongs to the UPF0342 family.

The protein is UPF0342 protein lmo2223 of Listeria monocytogenes serovar 1/2a (strain ATCC BAA-679 / EGD-e).